The primary structure comprises 475 residues: Ribulose bisphosphate carboxylase large chain (475 aa).

Lys14 bears the N6,N6,N6-trimethyllysine mark. Substrate contacts are provided by Asn123 and Thr173. Lys175 serves as the catalytic Proton acceptor. Lys177 is a binding site for substrate. The Mg(2+) site is built by Lys201, Asp203, and Glu204. Lys201 is subject to N6-carboxylysine. Catalysis depends on His294, which acts as the Proton acceptor. Substrate is bound by residues Arg295, His327, and Ser379.

This sequence belongs to the RuBisCO large chain family. Type I subfamily. As to quaternary structure, heterohexadecamer of 8 large chains and 8 small chains; disulfide-linked. The disulfide link is formed within the large subunit homodimers. Mg(2+) serves as cofactor. Post-translationally, the disulfide bond which can form in the large chain dimeric partners within the hexadecamer appears to be associated with oxidative stress and protein turnover.

It is found in the plastid. The catalysed reaction is 2 (2R)-3-phosphoglycerate + 2 H(+) = D-ribulose 1,5-bisphosphate + CO2 + H2O. The enzyme catalyses D-ribulose 1,5-bisphosphate + O2 = 2-phosphoglycolate + (2R)-3-phosphoglycerate + 2 H(+). Its function is as follows. RuBisCO catalyzes two reactions: the carboxylation of D-ribulose 1,5-bisphosphate, the primary event in carbon dioxide fixation, as well as the oxidative fragmentation of the pentose substrate in the photorespiration process. Both reactions occur simultaneously and in competition at the same active site. This chain is Ribulose bisphosphate carboxylase large chain (rbcL), found in Euglena longa (Euglenophycean alga).